The sequence spans 366 residues: tRNA 2-selenouridine synthase (366 aa).

In terms of domain architecture, Rhodanese spans 14-137 (LLENRPLIDV…IRSFLINTIE (124 aa)). C97 serves as the catalytic S-selanylcysteine intermediate.

Belongs to the SelU family. As to quaternary structure, monomer.

The catalysed reaction is 5-methylaminomethyl-2-thiouridine(34) in tRNA + selenophosphate + (2E)-geranyl diphosphate + H2O + H(+) = 5-methylaminomethyl-2-selenouridine(34) in tRNA + (2E)-thiogeraniol + phosphate + diphosphate. It catalyses the reaction 5-methylaminomethyl-2-thiouridine(34) in tRNA + (2E)-geranyl diphosphate = 5-methylaminomethyl-S-(2E)-geranyl-thiouridine(34) in tRNA + diphosphate. It carries out the reaction 5-methylaminomethyl-S-(2E)-geranyl-thiouridine(34) in tRNA + selenophosphate + H(+) = 5-methylaminomethyl-2-(Se-phospho)selenouridine(34) in tRNA + (2E)-thiogeraniol. The enzyme catalyses 5-methylaminomethyl-2-(Se-phospho)selenouridine(34) in tRNA + H2O = 5-methylaminomethyl-2-selenouridine(34) in tRNA + phosphate. Involved in the post-transcriptional modification of the uridine at the wobble position (U34) of tRNA(Lys), tRNA(Glu) and tRNA(Gln). Catalyzes the conversion of 2-thiouridine (S2U-RNA) to 2-selenouridine (Se2U-RNA). Acts in a two-step process involving geranylation of 2-thiouridine (S2U) to S-geranyl-2-thiouridine (geS2U) and subsequent selenation of the latter derivative to 2-selenouridine (Se2U) in the tRNA chain. The protein is tRNA 2-selenouridine synthase of Shewanella frigidimarina (strain NCIMB 400).